Consider the following 504-residue polypeptide: MVLADLGRKITSALRSLSNATIINEEVLNAMLKEVCTALLEADVNIKLVKQLRENVKSAIDLEEMASGLNKRKMIQHAVFKELVKLVDPGVKAWTPTKGKQNVIMFVGLQGSGKTTTCSKLAYFYQRKGWKTCLICADTFRAGAFDQLKQNATKARIPFYGSYTEMDPVIIASEGVEKFKNENFEIIIVDTSGRHKQEDSLFEEMLQVSNAIQPDNIVYVMDASIGQACEAQAKAFKDKVDVASVIVTKLDGHAKGGGALSAVAATKSPIIFIGTGEHIDDFEPFKTQPFISKLLGMGDIEGLIDKVNELKLDDNEALIEKLKHGQFTLRDMYEQFQNIMKMGPFSQILGMIPGFGTDFMSKGNEQESMARLKKLMTIMDSMNDQELDSTDGAKVFSKQPGRIQRVARGSGVSTRDVQELLTQYTKFAQMVKKMGGIKGLFKGGDMSKNVSQSQMAKLNQQMAKMMDPRVLHHMGGMAGLQSMMRQFQQGAAGNMKGMMGFNNM.

The NG-domain stretch occupies residues 1-295 (MVLADLGRKI…KTQPFISKLL (295 aa)). GTP-binding positions include 108 to 115 (GLQGSGKT), 190 to 194 (DTSGR), and 248 to 251 (TKLD). The interval 296-504 (GMGDIEGLID…MKGMMGFNNM (209 aa)) is M-domain.

It belongs to the GTP-binding SRP family. SRP54 subfamily. In terms of assembly, component of a signal recognition particle (SRP) complex that consists of a 7SL RNA molecule of 300 nucleotides and six protein subunits: SRP72, SRP68, SRP54, SRP19, SRP14 and SRP9. Interacts with RNPS1. Interacts with the SRP receptor subunit SRPRA.

The protein localises to the nucleus speckle. Its subcellular location is the cytoplasm. It localises to the endoplasmic reticulum. The enzyme catalyses GTP + H2O = GDP + phosphate + H(+). Its function is as follows. Component of the signal recognition particle (SRP) complex, a ribonucleoprotein complex that mediates the cotranslational targeting of secretory and membrane proteins to the endoplasmic reticulum (ER). As part of the SRP complex, associates with the SRP receptor (SR) component SRPRA to target secretory proteins to the endoplasmic reticulum membrane. Binds to the signal sequence of presecretory proteins when they emerge from the ribosomes. Displays basal GTPase activity, and stimulates reciprocal GTPase activation of the SR subunit SRPRA. Forms a guanosine 5'-triphosphate (GTP)-dependent complex with the SR subunit SRPRA. SR compaction and GTPase mediated rearrangement of SR drive SRP-mediated cotranslational protein translocation into the ER. Requires the presence of SRP9/SRP14 and/or SRP19 to stably interact with RNA. Plays a role in proliferation and differentiation of granulocytic cells, neutrophils migration capacity and exocrine pancreas development. The sequence is that of Signal recognition particle subunit SRP54 (Srp54) from Rattus norvegicus (Rat).